The chain runs to 200 residues: Small ribosomal subunit protein mS26 (200 aa).

Residues 1 to 27 (MLRALNRLAARPGGQPPTLLLLPVRGR) constitute a mitochondrion transit peptide. Lys159 is subject to N6-acetyllysine.

This sequence belongs to the mitochondrion-specific ribosomal protein mS26 family. In terms of assembly, component of the mitochondrial ribosome small subunit (28S) which comprises a 12S rRNA and about 30 distinct proteins.

It localises to the mitochondrion. In Rattus norvegicus (Rat), this protein is Small ribosomal subunit protein mS26 (Mrps26).